The primary structure comprises 250 residues: UPF0758 protein RPB_0700 (250 aa).

The tract at residues 1–27 (MVDPISNAAPPMPADSSERLDPPGFAE) is disordered. Positions 128 to 250 (VLSSWSAVID…HASLKGLKLF (123 aa)) constitute an MPN domain. Positions 199, 201, and 212 each coordinate Zn(2+). Positions 199-212 (HNHPSGDPTPSQAD) match the JAMM motif motif.

This sequence belongs to the UPF0758 family.

This chain is UPF0758 protein RPB_0700, found in Rhodopseudomonas palustris (strain HaA2).